Consider the following 430-residue polypeptide: Adenylosuccinate synthetase (430 aa).

GTP contacts are provided by residues 12-18 and 40-42; these read GDEGKGK and GHT. Asp-13 acts as the Proton acceptor in catalysis. Residues Asp-13 and Gly-40 each contribute to the Mg(2+) site. Residues 13–16, 38–41, Thr-130, Arg-144, Gln-224, Thr-239, and Arg-303 contribute to the IMP site; these read DEGK and NAGH. The active-site Proton donor is His-41. Position 299-305 (299-305) interacts with substrate; that stretch reads TTTGRKR. GTP contacts are provided by residues Arg-305, 331 to 333, and 413 to 415; these read KLD and STS.

The protein belongs to the adenylosuccinate synthetase family. As to quaternary structure, homodimer. Requires Mg(2+) as cofactor.

Its subcellular location is the cytoplasm. It catalyses the reaction IMP + L-aspartate + GTP = N(6)-(1,2-dicarboxyethyl)-AMP + GDP + phosphate + 2 H(+). Its pathway is purine metabolism; AMP biosynthesis via de novo pathway; AMP from IMP: step 1/2. Its function is as follows. Plays an important role in the de novo pathway of purine nucleotide biosynthesis. Catalyzes the first committed step in the biosynthesis of AMP from IMP. The chain is Adenylosuccinate synthetase from Ruegeria pomeroyi (strain ATCC 700808 / DSM 15171 / DSS-3) (Silicibacter pomeroyi).